Consider the following 460-residue polypeptide: GTPase Der (460 aa).

2 EngA-type G domains span residues Pro21–Asp187 and Val198–Asn373. GTP contacts are provided by residues Gly27–Ser34, Asp74–Phe78, Asn141–Glu144, Gly204–Ser211, Asp251–Ile255, and Asn316–Asp319. In terms of domain architecture, KH-like spans Thr374–Cys457.

This sequence belongs to the TRAFAC class TrmE-Era-EngA-EngB-Septin-like GTPase superfamily. EngA (Der) GTPase family. In terms of assembly, associates with the 50S ribosomal subunit.

Its function is as follows. GTPase that plays an essential role in the late steps of ribosome biogenesis. The polypeptide is GTPase Der (Treponema pallidum subsp. pallidum (strain SS14)).